The primary structure comprises 149 residues: Large ribosomal subunit protein bL9 (149 aa).

Belongs to the bacterial ribosomal protein bL9 family.

Functionally, binds to the 23S rRNA. The sequence is that of Large ribosomal subunit protein bL9 from Endomicrobium trichonymphae.